A 311-amino-acid chain; its full sequence is Olfactory receptor 5L2 (311 aa).

The Extracellular portion of the chain corresponds to 1 to 25 (MGKENCTTVAEFILLGLSDVPELRV). Asn-5 is a glycosylation site (N-linked (GlcNAc...) asparagine). A helical membrane pass occupies residues 26–46 (CLFLLFLLIYGVTLLANLGMT). Topologically, residues 47–54 (ALIQVSSR) are cytoplasmic. A helical transmembrane segment spans residues 55-75 (LHTPVYFFLSHLSFVDFCYSS). Residues 76 to 99 (IIVPKMLANIFNKDKAISFLGCMV) lie on the Extracellular side of the membrane. A disulfide bridge connects residues Cys-97 and Cys-189. Residues 100-120 (QFYLFCTCGVTEVFLLAVMAY) form a helical membrane-spanning segment. The Cytoplasmic segment spans residues 121–139 (DRFVAICNPLLYMVTMSQK). The chain crosses the membrane as a helical span at residues 140-160 (LRVELTSCCYFCGTVCSLIHS). At 161-196 (SLALRILFYRSNVINHFFCDLPPLLSLACSDVTVNE) the chain is on the extracellular side. Residue Asn-195 is glycosylated (N-linked (GlcNAc...) asparagine). A helical transmembrane segment spans residues 197-217 (TLLFLVATLNESVTIMIILTS). Topologically, residues 218–237 (YLLILTTILKIHSAESRHKA) are cytoplasmic. The chain crosses the membrane as a helical span at residues 238–258 (FSTCASHLTAITVSHGTILYI). The Extracellular portion of the chain corresponds to 259-271 (YCRPSSGNSGDVD). The chain crosses the membrane as a helical span at residues 272–292 (KVATVFYTVVIPMLNPLIYSL). Over 293–311 (RNKDVNKALRKVMGSKIHS) the chain is Cytoplasmic.

The protein belongs to the G-protein coupled receptor 1 family.

The protein localises to the cell membrane. Odorant receptor. In Homo sapiens (Human), this protein is Olfactory receptor 5L2 (OR5L2).